A 391-amino-acid polypeptide reads, in one-letter code: Terminal nucleotidyltransferase 5C (391 aa).

This sequence belongs to the TENT family. In terms of assembly, interacts with BCCIP and PABPC1; the interaction has no effect on TENT5C poly(A) polymerase function. Interacts with PLK4; this interaction leads to the TENT5C recruitment into the centrosome.

The protein localises to the nucleus. Its subcellular location is the cytoplasm. It is found in the cytoskeleton. It localises to the microtubule organizing center. The protein resides in the centrosome. It catalyses the reaction RNA(n) + ATP = RNA(n)-3'-adenine ribonucleotide + diphosphate. In terms of biological role, catalyzes the transfer of one adenosine molecule from an ATP to an mRNA poly(A) tail bearing a 3'-OH terminal group and enhances mRNA stability and gene expression. Can also elongate RNA oligos ending with uridine molecule, provided that the sequence is adenosine-rich. Mainly targets mRNAs encoding endoplasmic reticulum-targeted protein. The protein is Terminal nucleotidyltransferase 5C of Rattus norvegicus (Rat).